The sequence spans 7639 residues: Nonribosomal peptide synthetase 4 (7639 aa).

Positions W244–F636 are adenylation 1. Residues T776 to E852 form the Carrier 1 domain. The residue at position 813 (S813) is an O-(pantetheine 4'-phosphoryl)serine. Residues F865 to S1295 form an epimerization 1 region. A condensation 1 region spans residues V1337–I1767. An adenylation 2 region spans residues F1786–L2181. The Carrier 2 domain occupies A2313 to S2389. S2350 is modified (O-(pantetheine 4'-phosphoryl)serine). Residues V2426–L2852 are condensation 2. An adenylation 3 region spans residues Q2878–I3269. In terms of domain architecture, Carrier 3 spans R3403–E3479. An O-(pantetheine 4'-phosphoryl)serine modification is found at S3440. Positions A3491–Q3928 are epimerization 2. The condensation 3 stretch occupies residues E3961 to T4389. The interval F4407 to L4810 is adenylation 4. The Carrier 4 domain occupies A4944–E5020. S4981 is modified (O-(pantetheine 4'-phosphoryl)serine). A condensation 4 region spans residues Q5058–M5478. Residues F5498–L5900 are adenylation 5. Residues T6039 to G6115 enclose the Carrier 5 domain. An O-(pantetheine 4'-phosphoryl)serine modification is found at S6076. Residues F6133 to L6567 are epimerization 3. Residues V6607–Q7032 are condensation 5. The Carrier 6 domain occupies R7088 to S7164. S7125 is subject to O-(pantetheine 4'-phosphoryl)serine. Residues L7254–R7603 are condensation 6.

This sequence belongs to the NRP synthetase family.

The enzyme catalyses D-allo-threonine + D-leucine + D-alanine + L-proline + 2 L-leucine + A = fusahexin + AH2 + 6 H2O. It functions in the pathway secondary metabolite biosynthesis. Nonribosomal peptide synthetase; part of the gene cluster that mediates the biosynthesis of the fusahexin, a cyclic hydrophobic hexapeptide with the amino acid sequence cyclo-(D-Ala-L-Leu-D-allo-Thr-L-Pro-D-Leu-L-Leu) that plays an important role in cell surface hydrophobicity. Fusahexin might also play a role in virulence, sensitivity to osmotic stress and oxidative stress. NRPS4 is the only enzyme within the cluster and its 5 catalytic modules are sufficient to produce fusahexin. The modules 1 to 4 incorporate respectively D-alanine, L-leucine, D-allo-threonine, and L-proline, which is supported by the presence of epimerase domains in modules 1 and 3, which incorporate D-amino acids. The terminal module is responsible for incorporation of the two adjacent leucine units, where the epimerase domain is only used to convert the first unit to D-leucine. The terminal condensation domain (Ct) is involved in cyclization with D-alanine and thereby releasing of fusahexin. The polypeptide is Nonribosomal peptide synthetase 4 (Gibberella zeae (strain ATCC MYA-4620 / CBS 123657 / FGSC 9075 / NRRL 31084 / PH-1) (Wheat head blight fungus)).